Here is a 381-residue protein sequence, read N- to C-terminus: Galactose-1-phosphate uridylyltransferase (381 aa).

Residues Cys-65 and Cys-68 each coordinate Zn(2+). Residue 90-91 participates in UDP-alpha-D-glucose binding; that stretch reads ND. His-131 is a binding site for Zn(2+). Asn-175 serves as a coordination point for UDP-alpha-D-glucose. A Zn(2+)-binding site is contributed by His-186. Catalysis depends on His-188, which acts as the Tele-UMP-histidine intermediate. Position 190 (Gln-190) interacts with UDP-alpha-D-glucose. Fe cation-binding residues include Glu-204, His-306, His-323, and His-325. Residues 338-341 and 343-344 each bind UDP-alpha-D-glucose; these read KFMV and FE.

The protein belongs to the galactose-1-phosphate uridylyltransferase type 1 family. In terms of assembly, homodimer. Requires Zn(2+) as cofactor.

It carries out the reaction alpha-D-galactose 1-phosphate + UDP-alpha-D-glucose = alpha-D-glucose 1-phosphate + UDP-alpha-D-galactose. The protein operates within carbohydrate metabolism; galactose metabolism. This Cryptococcus neoformans var. neoformans serotype D (strain B-3501A) (Filobasidiella neoformans) protein is Galactose-1-phosphate uridylyltransferase (GAL7).